A 288-amino-acid chain; its full sequence is Lipoyl synthase (288 aa).

[4Fe-4S] cluster-binding residues include C39, C44, C50, C65, C69, C72, and S276. A Radical SAM core domain is found at 51–265 (WGKGTATFMI…KETGLKKGFE (215 aa)).

Belongs to the radical SAM superfamily. Lipoyl synthase family. It depends on [4Fe-4S] cluster as a cofactor.

The protein localises to the cytoplasm. It carries out the reaction [[Fe-S] cluster scaffold protein carrying a second [4Fe-4S](2+) cluster] + N(6)-octanoyl-L-lysyl-[protein] + 2 oxidized [2Fe-2S]-[ferredoxin] + 2 S-adenosyl-L-methionine + 4 H(+) = [[Fe-S] cluster scaffold protein] + N(6)-[(R)-dihydrolipoyl]-L-lysyl-[protein] + 4 Fe(3+) + 2 hydrogen sulfide + 2 5'-deoxyadenosine + 2 L-methionine + 2 reduced [2Fe-2S]-[ferredoxin]. It functions in the pathway protein modification; protein lipoylation via endogenous pathway; protein N(6)-(lipoyl)lysine from octanoyl-[acyl-carrier-protein]: step 2/2. Catalyzes the radical-mediated insertion of two sulfur atoms into the C-6 and C-8 positions of the octanoyl moiety bound to the lipoyl domains of lipoate-dependent enzymes, thereby converting the octanoylated domains into lipoylated derivatives. The sequence is that of Lipoyl synthase from Bacteroides fragilis (strain YCH46).